The sequence spans 88 residues: Small ribosomal subunit protein uS19 (88 aa).

The protein belongs to the universal ribosomal protein uS19 family.

Its function is as follows. Protein S19 forms a complex with S13 that binds strongly to the 16S ribosomal RNA. In Mycoplasma mycoides subsp. mycoides SC (strain CCUG 32753 / NCTC 10114 / PG1), this protein is Small ribosomal subunit protein uS19.